Here is a 316-residue protein sequence, read N- to C-terminus: Aspartate carbamoyltransferase catalytic subunit (316 aa).

R66 and T67 together coordinate carbamoyl phosphate. K94 is a binding site for L-aspartate. Residues R116, H146, and Q149 each contribute to the carbamoyl phosphate site. The L-aspartate site is built by R179 and R234. Carbamoyl phosphate-binding residues include G275 and P276.

The protein belongs to the aspartate/ornithine carbamoyltransferase superfamily. ATCase family. In terms of assembly, heterododecamer (2C3:3R2) of six catalytic PyrB chains organized as two trimers (C3), and six regulatory PyrI chains organized as three dimers (R2).

The enzyme catalyses carbamoyl phosphate + L-aspartate = N-carbamoyl-L-aspartate + phosphate + H(+). It functions in the pathway pyrimidine metabolism; UMP biosynthesis via de novo pathway; (S)-dihydroorotate from bicarbonate: step 2/3. Its function is as follows. Catalyzes the condensation of carbamoyl phosphate and aspartate to form carbamoyl aspartate and inorganic phosphate, the committed step in the de novo pyrimidine nucleotide biosynthesis pathway. The chain is Aspartate carbamoyltransferase catalytic subunit from Nitrosomonas europaea (strain ATCC 19718 / CIP 103999 / KCTC 2705 / NBRC 14298).